The sequence spans 141 residues: Large ribosomal subunit protein uL16 (141 aa).

A compositionally biased stretch (basic residues) spans 1–16; it reads MLMPRKPPKGFRKPHH. Residues 1 to 27 are disordered; it reads MLMPRKPPKGFRKPHHPDRSGASKGGN.

Belongs to the universal ribosomal protein uL16 family. Part of the 50S ribosomal subunit.

Functionally, binds 23S rRNA and is also seen to make contacts with the A and possibly P site tRNAs. This chain is Large ribosomal subunit protein uL16, found in Salinispora arenicola (strain CNS-205).